A 188-amino-acid polypeptide reads, in one-letter code: dCTP deaminase (188 aa).

DCTP is bound by residues 111-116 (KSTYAR), 135-137 (TLE), Q156, Y170, and Q180. The active-site Proton donor/acceptor is the E137.

It belongs to the dCTP deaminase family. As to quaternary structure, homotrimer.

The catalysed reaction is dCTP + H2O + H(+) = dUTP + NH4(+). It functions in the pathway pyrimidine metabolism; dUMP biosynthesis; dUMP from dCTP (dUTP route): step 1/2. Catalyzes the deamination of dCTP to dUTP. This is dCTP deaminase from Nitrosococcus oceani (strain ATCC 19707 / BCRC 17464 / JCM 30415 / NCIMB 11848 / C-107).